Reading from the N-terminus, the 160-residue chain is Cytochrome b6-f complex subunit 4 (160 aa).

3 helical membrane passes run 36 to 56, 95 to 115, and 131 to 151; these read LLYVFPVVIFGTIGLCTGLAI, LLGIACMAGVPLGLMLVPFIE, and AIFLFGTVVTIWLGIGATFPI.

This sequence belongs to the cytochrome b family. PetD subfamily. In terms of assembly, the 4 large subunits of the cytochrome b6-f complex are cytochrome b6, subunit IV (17 kDa polypeptide, PetD), cytochrome f and the Rieske protein, while the 4 small subunits are PetG, PetL, PetM and PetN. The complex functions as a dimer.

It is found in the cellular thylakoid membrane. In terms of biological role, component of the cytochrome b6-f complex, which mediates electron transfer between photosystem II (PSII) and photosystem I (PSI), cyclic electron flow around PSI, and state transitions. This is Cytochrome b6-f complex subunit 4 from Microcystis aeruginosa (strain NIES-843 / IAM M-2473).